Consider the following 485-residue polypeptide: Bifunctional protein GlmU (485 aa).

The tract at residues 1–241 is pyrophosphorylase; it reads MSASDFSSAV…ARELAGVNDR (241 aa). UDP-N-acetyl-alpha-D-glucosamine-binding positions include 13–16, Lys-27, Gln-84, and 89–90; these read LAAG and GT. Mg(2+) is bound at residue Asp-114. 4 residues coordinate UDP-N-acetyl-alpha-D-glucosamine: Gly-151, Glu-166, Asn-181, and Asn-239. Residue Asn-239 coordinates Mg(2+). The interval 242-262 is linker; sequence VQLAEAGAELNRRTVIAAMRG. The N-acetyltransferase stretch occupies residues 263 to 485; the sequence is GATIVDPATT…AAQNVHNQEG (223 aa). Residues Arg-344 and Lys-362 each coordinate UDP-N-acetyl-alpha-D-glucosamine. His-374 acts as the Proton acceptor in catalysis. UDP-N-acetyl-alpha-D-glucosamine is bound by residues Tyr-377 and Asn-388. Acetyl-CoA is bound by residues Ala-391, 397 to 398, Ser-416, and Ala-434; that span reads NY. The disordered stretch occupies residues 465 to 485; sequence RPGTAAAQAAEAAQNVHNQEG. Residues 469 to 478 show a composition bias toward low complexity; sequence AAAQAAEAAQ.

The protein in the N-terminal section; belongs to the N-acetylglucosamine-1-phosphate uridyltransferase family. In the C-terminal section; belongs to the transferase hexapeptide repeat family. In terms of assembly, homotrimer. It depends on Mg(2+) as a cofactor.

It localises to the cytoplasm. The catalysed reaction is alpha-D-glucosamine 1-phosphate + acetyl-CoA = N-acetyl-alpha-D-glucosamine 1-phosphate + CoA + H(+). It catalyses the reaction N-acetyl-alpha-D-glucosamine 1-phosphate + UTP + H(+) = UDP-N-acetyl-alpha-D-glucosamine + diphosphate. Its pathway is nucleotide-sugar biosynthesis; UDP-N-acetyl-alpha-D-glucosamine biosynthesis; N-acetyl-alpha-D-glucosamine 1-phosphate from alpha-D-glucosamine 6-phosphate (route II): step 2/2. It participates in nucleotide-sugar biosynthesis; UDP-N-acetyl-alpha-D-glucosamine biosynthesis; UDP-N-acetyl-alpha-D-glucosamine from N-acetyl-alpha-D-glucosamine 1-phosphate: step 1/1. The protein operates within bacterial outer membrane biogenesis; LPS lipid A biosynthesis. Functionally, catalyzes the last two sequential reactions in the de novo biosynthetic pathway for UDP-N-acetylglucosamine (UDP-GlcNAc). The C-terminal domain catalyzes the transfer of acetyl group from acetyl coenzyme A to glucosamine-1-phosphate (GlcN-1-P) to produce N-acetylglucosamine-1-phosphate (GlcNAc-1-P), which is converted into UDP-GlcNAc by the transfer of uridine 5-monophosphate (from uridine 5-triphosphate), a reaction catalyzed by the N-terminal domain. The polypeptide is Bifunctional protein GlmU (Corynebacterium glutamicum (strain ATCC 13032 / DSM 20300 / JCM 1318 / BCRC 11384 / CCUG 27702 / LMG 3730 / NBRC 12168 / NCIMB 10025 / NRRL B-2784 / 534)).